The primary structure comprises 533 residues: NEDD8-activating enzyme E1 regulatory subunit (533 aa).

An interaction with uba3 region spans residues 330–343 (DMIADSDKFIKLQN).

The protein belongs to the ubiquitin-activating E1 family. ULA1 subfamily. Heterodimer of uba3 and nae1. The complex binds nedd8 and ube2m.

The protein operates within protein modification; protein neddylation. Regulatory subunit of the dimeric uba3-nae1 E1 enzyme. E1 activates nedd8 by first adenylating its C-terminal glycine residue with ATP, thereafter linking this residue to the side chain of the catalytic cysteine, yielding a nedd8-uba3 thioester and free AMP. E1 finally transfers nedd8 to the catalytic cysteine of ube2m. The covalent attachment of nedd8 to target proteins is known as 'neddylation' and the process is involved in the regulation of cell growth, viability and development. This chain is NEDD8-activating enzyme E1 regulatory subunit (nae1), found in Xenopus laevis (African clawed frog).